We begin with the raw amino-acid sequence, 501 residues long: Membrane-bound lytic murein transglycosylase F (501 aa).

The N-terminal stretch at 1-29 is a signal peptide; that stretch reads MTKILLNTASTVLTRLWKLSLLGLVFAVA. Positions 30–274 are non-LT domain; it reads AATLVSSRIP…DAMETFYGHL (245 aa). Residues 275-501 are LT domain; that stretch reads GEIDYSGAIL…VKSISGTSSL (227 aa). Glu321 is an active-site residue.

The protein in the N-terminal section; belongs to the bacterial solute-binding protein 3 family. In the C-terminal section; belongs to the transglycosylase Slt family.

Its subcellular location is the cell outer membrane. It catalyses the reaction Exolytic cleavage of the (1-&gt;4)-beta-glycosidic linkage between N-acetylmuramic acid (MurNAc) and N-acetylglucosamine (GlcNAc) residues in peptidoglycan, from either the reducing or the non-reducing ends of the peptidoglycan chains, with concomitant formation of a 1,6-anhydrobond in the MurNAc residue.. Functionally, murein-degrading enzyme that degrades murein glycan strands and insoluble, high-molecular weight murein sacculi, with the concomitant formation of a 1,6-anhydromuramoyl product. Lytic transglycosylases (LTs) play an integral role in the metabolism of the peptidoglycan (PG) sacculus. Their lytic action creates space within the PG sacculus to allow for its expansion as well as for the insertion of various structures such as secretion systems and flagella. The polypeptide is Membrane-bound lytic murein transglycosylase F (Saccharophagus degradans (strain 2-40 / ATCC 43961 / DSM 17024)).